The primary structure comprises 215 residues: Putative B3 domain-containing protein Os11g0625400 (215 aa).

Positions 1–51 form a DNA-binding region, TF-B3 1; sequence MTVELEKIAGSFFISKGWKTFVHRTGLLSGQYIRFQVLTPSKINVLLFDKK. Residues 92-117 form a disordered region; that stretch reads SHTSNKETSSDSRTESMTDIPSSSDN. Residues 95 to 107 show a composition bias toward basic and acidic residues; it reads SNKETSSDSRTES. Over residues 108–117 the composition is skewed to polar residues; it reads MTDIPSSSDN. Residues 123–215 constitute a DNA-binding region (TF-B3 2); the sequence is DIKNYISIIG…PNVKITIDVL (93 aa).

The protein localises to the nucleus. The chain is Putative B3 domain-containing protein Os11g0625400 from Oryza sativa subsp. japonica (Rice).